We begin with the raw amino-acid sequence, 340 residues long: DNA-directed RNA polymerase subunit alpha (340 aa).

The alpha N-terminal domain (alpha-NTD) stretch occupies residues 1–236 (MLSLSKNWNT…EQLQLFISFE (236 aa)). The tract at residues 251–340 (FSPYLLKRVD…LSKRYEDSYN (90 aa)) is alpha C-terminal domain (alpha-CTD).

It belongs to the RNA polymerase alpha chain family. As to quaternary structure, homodimer. The RNAP catalytic core consists of 2 alpha, 1 beta, 1 beta' and 1 omega subunit. When a sigma factor is associated with the core the holoenzyme is formed, which can initiate transcription.

It carries out the reaction RNA(n) + a ribonucleoside 5'-triphosphate = RNA(n+1) + diphosphate. In terms of biological role, DNA-dependent RNA polymerase catalyzes the transcription of DNA into RNA using the four ribonucleoside triphosphates as substrates. This is DNA-directed RNA polymerase subunit alpha from Rickettsia akari (strain Hartford).